Here is a 480-residue protein sequence, read N- to C-terminus: RNA-binding protein 42 (480 aa).

The tract at residues 1–30 (MAGAGPAPGLPGAGGPVVPGPGAGIPGKSG) is disordered. A2 is modified (N-acetylalanine). A compositionally biased stretch (gly residues) spans 11 to 27 (PGAGGPVVPGPGAGIPG). At S135 the chain carries Phosphoserine. Residues R153, R158, R168, and R181 each carry the asymmetric dimethylarginine modification. A necessary for interaction with HNRNPK region spans residues 236–480 (ELGLGLGLGL…QKEKKKLGLR (245 aa)). The segment at 319 to 356 (SLRPRPRPPRPEPPPGLMALEVPEPLGEDKKKGKPEKL) is disordered. Residues 345 to 356 (GEDKKKGKPEKL) show a composition bias toward basic and acidic residues. Positions 381–459 (FRIFCGDLGN…RPIKLRKSMW (79 aa)) constitute an RRM domain.

It belongs to the RRM RBM42 family. As to quaternary structure, interacts with HNRNPK.

The protein resides in the nucleus. Its subcellular location is the cytoplasm. Functionally, binds (via the RRM domain) to the 3'-untranslated region (UTR) of CDKN1A mRNA. The chain is RNA-binding protein 42 (RBM42) from Homo sapiens (Human).